We begin with the raw amino-acid sequence, 349 residues long: tRNA N6-adenosine threonylcarbamoyltransferase (349 aa).

Fe cation-binding residues include H111 and H115. Residues 134 to 138 (LVSGG), D167, G180, D184, and N279 contribute to the substrate site. D307 contributes to the Fe cation binding site.

It belongs to the KAE1 / TsaD family. Requires Fe(2+) as cofactor.

It localises to the cytoplasm. It carries out the reaction L-threonylcarbamoyladenylate + adenosine(37) in tRNA = N(6)-L-threonylcarbamoyladenosine(37) in tRNA + AMP + H(+). Required for the formation of a threonylcarbamoyl group on adenosine at position 37 (t(6)A37) in tRNAs that read codons beginning with adenine. Is involved in the transfer of the threonylcarbamoyl moiety of threonylcarbamoyl-AMP (TC-AMP) to the N6 group of A37, together with TsaE and TsaB. TsaD likely plays a direct catalytic role in this reaction. In Nostoc punctiforme (strain ATCC 29133 / PCC 73102), this protein is tRNA N6-adenosine threonylcarbamoyltransferase.